The following is a 1525-amino-acid chain: Multidrug resistance protein mrp-7 (1525 aa).

Topologically, residues 1–24 are extracellular; sequence MLSSFCGDGHPFSTGLPNVSICAQ. N-linked (GlcNAc...) asparagine glycosylation occurs at asparagine 18. The helical transmembrane segment at 25–45 threads the bilayer; that stretch reads HTVLVWVPAAFFLLTLPFLSA. At 46 to 66 the chain is on the cytoplasmic side; it reads QCHLTAQRFARLPFSAHFIIK. The chain crosses the membrane as a helical span at residues 67–87; it reads LLLVAFLAANSLATWCYVLFS. The Extracellular segment spans residues 88–94; it reads KNSYAAA. A helical membrane pass occupies residues 95–115; the sequence is YYVYPGLWVLVWTGTFLVHLI. Residues 116–118 are Cytoplasmic-facing; that stretch reads RLR. Residues 119 to 139 traverse the membrane as a helical segment; sequence CGLVSSGIQHVTSLIFLLCGA. Residues 140–165 lie on the Extracellular side of the membrane; it reads PEFYQWIRMENSNSFPNDLTTTDSAQ. The chain crosses the membrane as a helical span at residues 166 to 186; the sequence is FLSIAYLSWYSALILYTFSLC. Over 187–346 the chain is Cytoplasmic; it reads FADPRGAKTD…APFWKGMALS (160 aa). Positions 305–587 constitute an ABC transmembrane type-1 1 domain; sequence LLASTLKFVS…IALLINQAVQ (283 aa). A helical membrane pass occupies residues 347–367; it reads ILMFSVSELRSLILNGYFYIM. At 368–434 the chain is on the extracellular side; it reads FRMGTKIQTS…SCPYQITFAL (67 aa). A helical transmembrane segment spans residues 435-455; it reads VYLFITLGYSALPGVVIMVIF. Over 456–535 the chain is Cytoplasmic; that stretch reads VPMNIISSMI…NILDSFNTAS (80 aa). Residues 536–556 form a helical membrane-spanning segment; sequence PFLVALFSFGTFVLSNPSHLL. Topologically, residues 557 to 561 are extracellular; sequence TPQIA. Residues 562–582 traverse the membrane as a helical segment; it reads FVSLALFNQLRSPMTMIALLI. The Cytoplasmic portion of the chain corresponds to 583 to 953; it reads NQAVQAVVSN…ATYQLYVKAA (371 aa). Residues 622-849 enclose the ABC transporter 1 domain; sequence VRVENLTASW…RGLFFDFMEE (228 aa). Residue 659–666 participates in ATP binding; it reads GKVGSGKS. A disordered region spans residues 900 to 925; it reads ELTTQISTMSSPEKPPTGTSPAAATE. The chain crosses the membrane as a helical span at residues 954–974; it reads GYLLSIAFIGFFIVYMTLQIL. One can recognise an ABC transmembrane type-1 2 domain in the interval 959–1245; sequence IAFIGFFIVY…AVRQVSEIEA (287 aa). Residues 975–1005 are Extracellular-facing; it reads RSFWLSAWSDEYDPDSPSAHPMAKGWRLGVY. Residues 1006-1026 form a helical membrane-spanning segment; the sequence is GALGFSETACFFVALLALVFV. Residues 1027-1068 lie on the Cytoplasmic side of the membrane; sequence GQRASKNLHGPLIHNLMRSPMSFYDTTPLGRILNRCAKDIET. The helical transmembrane segment at 1069–1089 threads the bilayer; sequence IDMMLPMNFRYLVMCVLQVAF. Threonine 1090 is a topological domain (extracellular). Residues 1091 to 1111 form a helical membrane-spanning segment; that stretch reads LIVIIISTPLFAVVILPLALI. The Cytoplasmic segment spans residues 1112-1184; sequence YLIFLRYYVP…RYSSLVSNRW (73 aa). The chain crosses the membrane as a helical span at residues 1185-1205; sequence LAVRLEFVGNCIIFFAALFAV. The Extracellular segment spans residues 1206–1525; it reads LSKEFGWITS…ADAAEQDKHE (320 aa). The N-linked (GlcNAc...) asparagine glycan is linked to asparagine 1228. Residues 1282 to 1516 enclose the ABC transporter 2 domain; sequence VKFDGYSTRY…KNSAFAKMVA (235 aa). Residue 1316–1323 coordinates ATP; that stretch reads GRTGAGKS. N-linked (GlcNAc...) asparagine glycosylation is found at asparagine 1358 and asparagine 1418.

It belongs to the ABC transporter superfamily. ABCC family. Conjugate transporter (TC 3.A.1.208) subfamily. As to expression, expressed in head neurons, including the dopamine (DA) motor neuron, and other cells in the body.

The protein localises to the cell membrane. Functionally, negatively regulates cellular toxicity by mediating the export of environmental toxicants such as methylmercury out of the cell. Plays a role in inhibiting methylmercury-induced dopamine (DA) motor neuron degeneration. Not involved in Mn(2+)- or Al(3+)-associated toxicity. The polypeptide is Multidrug resistance protein mrp-7 (Caenorhabditis elegans).